Consider the following 435-residue polypeptide: Enolase (435 aa).

Glutamine 163 is a (2R)-2-phosphoglycerate binding site. The active-site Proton donor is the glutamate 205. Mg(2+)-binding residues include aspartate 243, glutamate 292, and aspartate 319. (2R)-2-phosphoglycerate is bound by residues lysine 344, arginine 373, serine 374, and lysine 395. The active-site Proton acceptor is the lysine 344.

Belongs to the enolase family. Mg(2+) serves as cofactor.

It localises to the cytoplasm. Its subcellular location is the secreted. It is found in the cell surface. It catalyses the reaction (2R)-2-phosphoglycerate = phosphoenolpyruvate + H2O. Its pathway is carbohydrate degradation; glycolysis; pyruvate from D-glyceraldehyde 3-phosphate: step 4/5. Functionally, catalyzes the reversible conversion of 2-phosphoglycerate (2-PG) into phosphoenolpyruvate (PEP). It is essential for the degradation of carbohydrates via glycolysis. This chain is Enolase, found in Streptococcus pyogenes serotype M12 (strain MGAS2096).